Consider the following 74-residue polypeptide: ATP synthase subunit c (74 aa).

2 consecutive transmembrane segments (helical) span residues 8 to 28 (FIGIGLMAIGIYGAALGVSNI) and 52 to 72 (IGAGLAEAMGLFSFVIAMLLI).

Belongs to the ATPase C chain family. F-type ATPases have 2 components, F(1) - the catalytic core - and F(0) - the membrane proton channel. F(1) has five subunits: alpha(3), beta(3), gamma(1), delta(1), epsilon(1). F(0) has three main subunits: a(1), b(2) and c(10-14). The alpha and beta chains form an alternating ring which encloses part of the gamma chain. F(1) is attached to F(0) by a central stalk formed by the gamma and epsilon chains, while a peripheral stalk is formed by the delta and b chains.

The protein resides in the cell inner membrane. In terms of biological role, f(1)F(0) ATP synthase produces ATP from ADP in the presence of a proton or sodium gradient. F-type ATPases consist of two structural domains, F(1) containing the extramembraneous catalytic core and F(0) containing the membrane proton channel, linked together by a central stalk and a peripheral stalk. During catalysis, ATP synthesis in the catalytic domain of F(1) is coupled via a rotary mechanism of the central stalk subunits to proton translocation. Its function is as follows. Key component of the F(0) channel; it plays a direct role in translocation across the membrane. A homomeric c-ring of between 10-14 subunits forms the central stalk rotor element with the F(1) delta and epsilon subunits. In Rickettsia akari (strain Hartford), this protein is ATP synthase subunit c.